A 304-amino-acid polypeptide reads, in one-letter code: Porphobilinogen deaminase (304 aa).

An S-(dipyrrolylmethanemethyl)cysteine modification is found at Cys240.

The protein belongs to the HMBS family. Monomer. Dipyrromethane is required as a cofactor.

The enzyme catalyses 4 porphobilinogen + H2O = hydroxymethylbilane + 4 NH4(+). The protein operates within porphyrin-containing compound metabolism; protoporphyrin-IX biosynthesis; coproporphyrinogen-III from 5-aminolevulinate: step 2/4. Tetrapolymerization of the monopyrrole PBG into the hydroxymethylbilane pre-uroporphyrinogen in several discrete steps. The chain is Porphobilinogen deaminase from Xanthomonas oryzae pv. oryzae (strain KACC10331 / KXO85).